The primary structure comprises 349 residues: Phosphoribosylformylglycinamidine cyclo-ligase (349 aa).

Belongs to the AIR synthase family.

The protein localises to the cytoplasm. The catalysed reaction is 2-formamido-N(1)-(5-O-phospho-beta-D-ribosyl)acetamidine + ATP = 5-amino-1-(5-phospho-beta-D-ribosyl)imidazole + ADP + phosphate + H(+). It participates in purine metabolism; IMP biosynthesis via de novo pathway; 5-amino-1-(5-phospho-D-ribosyl)imidazole from N(2)-formyl-N(1)-(5-phospho-D-ribosyl)glycinamide: step 2/2. The chain is Phosphoribosylformylglycinamidine cyclo-ligase from Listeria monocytogenes serotype 4a (strain HCC23).